The chain runs to 126 residues: DNA-directed RNA polymerase subunit omega (126 aa).

It belongs to the RNA polymerase subunit omega family. The RNAP catalytic core consists of 2 alpha, 1 beta, 1 beta' and 1 omega subunit. When a sigma factor is associated with the core the holoenzyme is formed, which can initiate transcription.

It catalyses the reaction RNA(n) + a ribonucleoside 5'-triphosphate = RNA(n+1) + diphosphate. Its function is as follows. Promotes RNA polymerase assembly. Latches the N- and C-terminal regions of the beta' subunit thereby facilitating its interaction with the beta and alpha subunits. In Rickettsia bellii (strain OSU 85-389), this protein is DNA-directed RNA polymerase subunit omega.